We begin with the raw amino-acid sequence, 375 residues long: Chaperone protein DnaJ (375 aa).

The J domain occupies 5–70; the sequence is DYYEVLGVNR…QKKGAYDRYG (66 aa). The CR-type zinc finger occupies 134 to 212; the sequence is GAEKTIRIPT…CGGAGRVKKQ (79 aa). C147, C150, C164, C167, C186, C189, C200, and C203 together coordinate Zn(2+). CXXCXGXG motif repeat units follow at residues 147–154, 164–171, 186–193, and 200–207; these read CGTCHGSG, CPTCGGAG, CPKCHGTG, and CGDCGGAG.

The protein belongs to the DnaJ family. Homodimer. It depends on Zn(2+) as a cofactor.

It is found in the cytoplasm. Its function is as follows. Participates actively in the response to hyperosmotic and heat shock by preventing the aggregation of stress-denatured proteins and by disaggregating proteins, also in an autonomous, DnaK-independent fashion. Unfolded proteins bind initially to DnaJ; upon interaction with the DnaJ-bound protein, DnaK hydrolyzes its bound ATP, resulting in the formation of a stable complex. GrpE releases ADP from DnaK; ATP binding to DnaK triggers the release of the substrate protein, thus completing the reaction cycle. Several rounds of ATP-dependent interactions between DnaJ, DnaK and GrpE are required for fully efficient folding. Also involved, together with DnaK and GrpE, in the DNA replication of plasmids through activation of initiation proteins. In Azoarcus sp. (strain BH72), this protein is Chaperone protein DnaJ.